A 323-amino-acid polypeptide reads, in one-letter code: Transcription factor JunD (323 aa).

Disordered regions lie at residues 138–173 (QNQL…APGL) and 197–221 (PFAA…QIVP). The span at 141–167 (LGGGGGPNGGAAAAGGGGGGGGGGGGE) shows a compositional bias: gly residues. Pro residues predominate over residues 198–212 (FAAPPPRLPPPPPPP). The tract at residues 242–269 (RIKAERKRLRNRIAASKCRKRKLERISR) is basic motif. The bZIP domain occupies 242-305 (RIKAERKRLR…AQLKQKVLSH (64 aa)). The tract at residues 270 to 298 (LEEKVKSLKSQNTELASTASLLREQVAQL) is leucine-zipper.

This sequence belongs to the bZIP family. Jun subfamily. Binds DNA as a dimer.

It is found in the nucleus. The chain is Transcription factor JunD (JUND) from Gallus gallus (Chicken).